The primary structure comprises 281 residues: HTH-type transcriptional activator RhaR (281 aa).

Positions 178–276 (DKLLAALAAS…GMSPGQWRQR (99 aa)) constitute an HTH araC/xylS-type domain. 2 consecutive DNA-binding regions (H-T-H motif) follow at residues 195–216 (ERFCEQEGGSERALRQQFRQQT) and 243–266 (IGDIAMQCGFEDSNYFSVVFSREI).

As to quaternary structure, binds DNA as a dimer.

It localises to the cytoplasm. Its function is as follows. Activates expression of the rhaSR operon in response to L-rhamnose. This is HTH-type transcriptional activator RhaR from Klebsiella pneumoniae subsp. pneumoniae (strain ATCC 700721 / MGH 78578).